Reading from the N-terminus, the 290-residue chain is Pyridoxal kinase PdxY (290 aa).

Residues Ser-9 and 44–45 each bind substrate; that span reads TQ. Positions 112, 144, 149, and 182 each coordinate ATP. A substrate-binding site is contributed by Asp-221.

The protein belongs to the pyridoxine kinase family. PdxY subfamily. Homodimer. It depends on Mg(2+) as a cofactor.

The enzyme catalyses pyridoxal + ATP = pyridoxal 5'-phosphate + ADP + H(+). The protein operates within cofactor metabolism; pyridoxal 5'-phosphate salvage; pyridoxal 5'-phosphate from pyridoxal: step 1/1. In terms of biological role, pyridoxal kinase involved in the salvage pathway of pyridoxal 5'-phosphate (PLP). Catalyzes the phosphorylation of pyridoxal to PLP. This is Pyridoxal kinase PdxY from Vibrio vulnificus (strain CMCP6).